We begin with the raw amino-acid sequence, 217 residues long: Thymidylate kinase (217 aa).

7–14 contributes to the ATP binding site; it reads GIEGTGKT.

This sequence belongs to the thymidylate kinase family.

The enzyme catalyses dTMP + ATP = dTDP + ADP. Functionally, phosphorylation of dTMP to form dTDP in both de novo and salvage pathways of dTTP synthesis. This Maridesulfovibrio salexigens (strain ATCC 14822 / DSM 2638 / NCIMB 8403 / VKM B-1763) (Desulfovibrio salexigens) protein is Thymidylate kinase.